A 73-amino-acid chain; its full sequence is Large ribosomal subunit protein uL29 (73 aa).

It belongs to the universal ribosomal protein uL29 family.

This chain is Large ribosomal subunit protein uL29 (rpmC), found in Synechocystis sp. (strain ATCC 27184 / PCC 6803 / Kazusa).